A 379-amino-acid chain; its full sequence is Tryptophan 2,3-dioxygenase (379 aa).

Residues 57 to 61 (FIITH) and arginine 128 contribute to the substrate site. A heme-binding site is contributed by histidine 312. Substrate is bound at residue threonine 327.

Belongs to the tryptophan 2,3-dioxygenase family. In terms of assembly, homotetramer. Dimer of dimers. It depends on heme as a cofactor.

It carries out the reaction L-tryptophan + O2 = N-formyl-L-kynurenine. It participates in amino-acid degradation; L-tryptophan degradation via kynurenine pathway; L-kynurenine from L-tryptophan: step 1/2. Its pathway is pigment biosynthesis; ommochrome biosynthesis. Functionally, heme-dependent dioxygenase that catalyzes the oxidative cleavage of the L-tryptophan (L-Trp) pyrrole ring and converts L-tryptophan to N-formyl-L-kynurenine. Catalyzes the oxidative cleavage of the indole moiety. Required during larval growth to control the level of potentially harmful free tryptophan in the hemolymph. In the adult the same reaction is the first step in the ommochrome biosynthetic pathway. This chain is Tryptophan 2,3-dioxygenase, found in Drosophila melanogaster (Fruit fly).